We begin with the raw amino-acid sequence, 126 residues long: Alpha-lactalbumin (126 aa).

Residues Arg-1–Cys-126 enclose the C-type lysozyme domain. 4 disulfide bridges follow: Cys-6/Cys-126, Cys-30/Cys-117, Cys-63/Cys-82, and Cys-78/Cys-96. Residue Asn-47 is glycosylated (N-linked (GlcNAc...) asparagine). 5 residues coordinate Ca(2+): Lys-84, Asp-87, Asp-89, Asp-92, and Asp-93.

It belongs to the glycosyl hydrolase 22 family. Lactose synthase (LS) is a heterodimer of a catalytic component, beta1,4-galactosyltransferase (beta4Gal-T1) and a regulatory component, alpha-lactalbumin (LA). Mammary gland specific. Secreted in milk.

It localises to the secreted. In terms of biological role, regulatory subunit of lactose synthase, changes the substrate specificity of galactosyltransferase in the mammary gland making glucose a good acceptor substrate for this enzyme. This enables LS to synthesize lactose, the major carbohydrate component of milk. In other tissues, galactosyltransferase transfers galactose onto the N-acetylglucosamine of the oligosaccharide chains in glycoproteins. The chain is Alpha-lactalbumin (LALBA) from Ornithorhynchus anatinus (Duckbill platypus).